Consider the following 101-residue polypeptide: Protein Tat (101 aa).

Residues Met1–Lys24 form an interaction with human CREBBP region. Residues Met1–Gly48 form a transactivation region. Zn(2+)-binding residues include Cys22, Cys25, and Cys27. The segment at Cys22 to Cys37 is cysteine-rich. Lys28 is modified (N6-acetyllysine; by host PCAF). Zn(2+) contacts are provided by Cys30, His33, Cys34, and Cys37. The core stretch occupies residues Phe38–Gly48. Residues Gly48 to Thr58 are compositionally biased toward basic residues. A disordered region spans residues Gly48 to Ala101. The short motif at Arg49–Arg57 is the Nuclear localization signal, RNA-binding (TAR), and protein transduction element. The interaction with the host capping enzyme RNGTT stretch occupies residues Arg49 to Glu86. Lys50 and Lys51 each carry N6-acetyllysine; by host EP300 and GCN5L2. Asymmetric dimethylarginine; by host PRMT6 occurs at positions 52 and 53. Positions Pro59 to Ser75 are enriched in polar residues. Lys71 is covalently cross-linked (Glycyl lysine isopeptide (Lys-Gly) (interchain with G-Cter in ubiquitin)). The Cell attachment site motif lies at Arg78–Asp80. Basic and acidic residues predominate over residues Gly83 to Ala101.

It belongs to the lentiviruses Tat family. Interacts with host CCNT1. Associates with the P-TEFb complex composed at least of Tat, P-TEFb (CDK9 and CCNT1), TAR RNA, RNA Pol II. Recruits the HATs CREBBP, TAF1/TFIID, EP300, PCAF and GCN5L2. Interacts with host KAT5/Tip60; this interaction targets the latter to degradation. Interacts with the host deacetylase SIRT1. Interacts with host capping enzyme RNGTT; this interaction stimulates RNGTT. Binds to host KDR, and to the host integrins ITGAV/ITGB3 and ITGA5/ITGB1. Interacts with host KPNB1/importin beta-1 without previous binding to KPNA1/importin alpha-1. Interacts with EIF2AK2. Interacts with host nucleosome assembly protein NAP1L1; this interaction may be required for the transport of Tat within the nucleus, since the two proteins interact at the nuclear rim. Interacts with host C1QBP/SF2P32; this interaction involves lysine-acetylated Tat. Interacts with the host chemokine receptors CCR2, CCR3 and CXCR4. Interacts with host DPP4/CD26; this interaction may trigger an anti-proliferative effect. Interacts with host LDLR. Interacts with the host extracellular matrix metalloproteinase MMP1. Interacts with host PRMT6; this interaction mediates Tat's methylation. Interacts with, and is ubiquitinated by MDM2/Hdm2. Interacts with host PSMC3 and HTATIP2. Interacts with STAB1; this interaction may overcome SATB1-mediated repression of IL2 and IL2RA (interleukin) in T cells by binding to the same domain than HDAC1. Interacts (when acetylated) with human CDK13, thereby increasing HIV-1 mRNA splicing and promoting the production of the doubly spliced HIV-1 protein Nef. Interacts with host TBP; this interaction modulates the activity of transcriptional pre-initiation complex. Interacts with host RELA. Interacts with host PLSCR1; this interaction negatively regulates Tat transactivation activity by altering its subcellular distribution. Post-translationally, asymmetrical arginine methylation by host PRMT6 seems to diminish the transactivation capacity of Tat and affects the interaction with host CCNT1. In terms of processing, acetylation by EP300, CREBBP, GCN5L2/GCN5 and PCAF regulates the transactivation activity of Tat. EP300-mediated acetylation of Lys-50 promotes dissociation of Tat from the TAR RNA through the competitive binding to PCAF's bromodomain. In addition, the non-acetylated Tat's N-terminus can also interact with PCAF. PCAF-mediated acetylation of Lys-28 enhances Tat's binding to CCNT1. Lys-50 is deacetylated by SIRT1. Polyubiquitination by host MDM2 does not target Tat to degradation, but activates its transactivation function and fosters interaction with CCNT1 and TAR RNA. Post-translationally, phosphorylated by EIF2AK2 on serine and threonine residues adjacent to the basic region important for TAR RNA binding and function. Phosphorylation of Tat by EIF2AK2 is dependent on the prior activation of EIF2AK2 by dsRNA.

The protein localises to the host nucleus. It is found in the host nucleolus. Its subcellular location is the host cytoplasm. It localises to the secreted. Functionally, transcriptional activator that increases RNA Pol II processivity, thereby increasing the level of full-length viral transcripts. Recognizes a hairpin structure at the 5'-LTR of the nascent viral mRNAs referred to as the transactivation responsive RNA element (TAR) and recruits the cyclin T1-CDK9 complex (P-TEFb complex) that will in turn hyperphosphorylate the RNA polymerase II to allow efficient elongation. The CDK9 component of P-TEFb and other Tat-activated kinases hyperphosphorylate the C-terminus of RNA Pol II that becomes stabilized and much more processive. Other factors such as HTATSF1/Tat-SF1, SUPT5H/SPT5, and HTATIP2 are also important for Tat's function. Besides its effect on RNA Pol II processivity, Tat induces chromatin remodeling of proviral genes by recruiting the histone acetyltransferases (HATs) CREBBP, EP300 and PCAF to the chromatin. This also contributes to the increase in proviral transcription rate, especially when the provirus integrates in transcriptionally silent region of the host genome. To ensure maximal activation of the LTR, Tat mediates nuclear translocation of NF-kappa-B by interacting with host RELA. Through its interaction with host TBP, Tat may also modulate transcription initiation. Tat can reactivate a latently infected cell by penetrating in it and transactivating its LTR promoter. In the cytoplasm, Tat is thought to act as a translational activator of HIV-1 mRNAs. Its function is as follows. Extracellular circulating Tat can be endocytosed by surrounding uninfected cells via the binding to several surface receptors such as CD26, CXCR4, heparan sulfate proteoglycans (HSPG) or LDLR. Neurons are rarely infected, but they internalize Tat via their LDLR. Through its interaction with nuclear HATs, Tat is potentially able to control the acetylation-dependent cellular gene expression. Modulates the expression of many cellular genes involved in cell survival, proliferation or in coding for cytokines or cytokine receptors. Tat plays a role in T-cell and neurons apoptosis. Tat induced neurotoxicity and apoptosis probably contribute to neuroAIDS. Circulating Tat also acts as a chemokine-like and/or growth factor-like molecule that binds to specific receptors on the surface of the cells, affecting many cellular pathways. In the vascular system, Tat binds to ITGAV/ITGB3 and ITGA5/ITGB1 integrins dimers at the surface of endothelial cells and competes with bFGF for heparin-binding sites, leading to an excess of soluble bFGF. This Human immunodeficiency virus type 1 group M subtype F1 (isolate VI850) (HIV-1) protein is Protein Tat.